We begin with the raw amino-acid sequence, 250 residues long: Probable phosphatase VIBHAR_04983 (250 aa).

Zn(2+) is bound by residues His8, His10, His16, His41, Glu74, His102, His132, Asp194, and His196.

The protein belongs to the PHP family. Requires Zn(2+) as cofactor.

This Vibrio campbellii (strain ATCC BAA-1116) protein is Probable phosphatase VIBHAR_04983.